The sequence spans 468 residues: Protein ABHD15 (468 aa).

A signal peptide spans 1 to 23 (MPPWGAALALILAVLALLGLLGP). Residues 33-61 (VGERTLPGAQDRDDGEEADGGGPADQFSD) are disordered. Catalysis depends on charge relay system residues Asp360 and His391. The residue at position 434 (Ser434) is a Phosphoserine.

This sequence belongs to the AB hydrolase superfamily. AB hydrolase 4 family. As to quaternary structure, interacts with PDE3B; this interaction regulates PDE3B's stability and expression and, thereby, impacts the antilipolytic action of insulin.

The protein resides in the secreted. May regulate adipocyte lipolysis and liver lipid accumulation. The sequence is that of Protein ABHD15 from Homo sapiens (Human).